Here is a 1135-residue protein sequence, read N- to C-terminus: Glutamate receptor ionotropic, NMDA 3A (1135 aa).

The first 23 residues, 1-23 (MRRLSLWWLLSRVCLLLPPPCAL), serve as a signal peptide directing secretion. The Extracellular portion of the chain corresponds to 24–674 (VLAGVPSSSS…PIGAFMWPLH (651 aa)). Residues 60-117 (TAPRAASRAQEGGRAGAQRDDPESGTWRPPAPSQGARWLGSALHGRGPPGSRKLGEGA) are disordered. Residues N145, N264, N275, N285, N296, N300, N426, N439, N549, and N565 are each glycosylated (N-linked (GlcNAc...) asparagine). Cystine bridges form between C537-C575 and C543-C576. The glycine site is built by S631, S633, and R638. D-serine contacts are provided by S633 and R638. The helical transmembrane segment at 675 to 694 (WTMWLGIFVALHITAIFLTL) threads the bilayer. The Cytoplasmic portion of the chain corresponds to 695-715 (YEWKSPFGMTPKGRNRNKVFS). The discontinuously helical intramembrane region spans 716 to 727 (FSSALNVCYALL). Residues 728–741 (FGRTAAIKPPKCWT) lie on the Cytoplasmic side of the membrane. Residues 742-761 (GRFLMNLWAIFCMFCLSTYT) traverse the membrane as a helical segment. Topologically, residues 762 to 932 (ANLAAVMVGE…TLQMGIKHFS (171 aa)) are extracellular. A glycine-binding site is contributed by S801. D-serine is bound by residues S801, A802, and D845. Residue D845 participates in glycine binding. A disulfide bridge links C859 with C913. N886 carries an N-linked (GlcNAc...) asparagine glycan. A helical transmembrane segment spans residues 933–948 (GLFVLLCIGFGLSILT). Residues 949–1135 (TIGEHIVHRL…YQKTNRTCES (187 aa)) are Cytoplasmic-facing. The PPP2CB binding site stretch occupies residues 951-987 (GEHIVHRLLLPRIKNKSKLQYWLHTSQRFHRALNTSF). Residues 1080-1129 (TTNGKADSLNVTRSSVIQELSELEKQIQVIRQELQLAVSRKTELEEYQKT) are a coiled coil. A GIT1-binding region spans residues 1082 to 1115 (NGKADSLNVTRSSVIQELSELEKQIQVIRQELQL).

This sequence belongs to the glutamate-gated ion channel (TC 1.A.10.1) family. NR3A/GRIN3A subfamily. Heterotetramer. Forms heterotetrameric channels composed of two GluN1/zeta subunits (GRIN1), and two identical GluN3 subunits (GRIN3A or GRIN3B) (in vitro). Can also form heterotetrameric channels that contain at least two GluN1 subunits and at least a combination of one GluN2 and one GluN3 subunits (in vitro). Does not form functional homomeric channels. Found in a complex with GRIN1, GRIN2A or GRIN2B and PPP2CB. Probably interacts with PPP2CB. No complex with PPP2CB is detected when NMDARs are stimulated by NMDA. Interacts (via C-terminus) with GIT1, but not with GRIA1/GluA1, nor with synaptophysin/SYP; this interaction competes with GIT1 interaction with ARHGEF7/beta-PIX. Post-translationally, N-glycosylated. As to expression, isoform 1 and isoform 2 are expressed in olfactory bulb, frontal occipital, entorhinal and pyriform cortices, hippocampus, striatum, thalamus, cerebellum and spinal cord.

It is found in the cell membrane. The protein resides in the postsynaptic cell membrane. Its subcellular location is the postsynaptic density. The enzyme catalyses Ca(2+)(in) = Ca(2+)(out). It catalyses the reaction Na(+)(in) = Na(+)(out). Its activity is regulated as follows. Excitatory glycine receptors are inhibited by D-serine at a concentrion of 10uM. Component of a non-conventional N-methyl-D-aspartate (NMDA) receptors (NMDARs) that function as heterotetrameric, ligand-gated cation channels with low calcium permeability and low voltage-dependent block by Mg(2+). During the development of neural circuits, participates in the synaptic refinement period, restricting spine maturation and growth. Forms glutamatergic receptor complexes with GluN1 and GluN2 subunits which are activated by glycine binding to the GluN1 and GluN3 subunits and L-glutamate binding to GluN2 subunits. Forms excitatory glycinergic receptor complexes with GluN1 alone which are activated by glycine binding to the GluN1 and GluN3 subunits. GluN3A subunit also binds D-serine. Each GluN3 subunit confers differential attributes to channel properties, including activation, deactivation and desensitization kinetics, pH sensitivity, Ca2(+) permeability, and binding to allosteric modulators. By competing with GIT1 interaction with ARHGEF7/beta-PIX, may reduce GIT1/ARHGEF7-regulated local activation of RAC1, hence affecting signaling and limiting the maturation and growth of inactive synapses. The polypeptide is Glutamate receptor ionotropic, NMDA 3A (Rattus norvegicus (Rat)).